An 83-amino-acid chain; its full sequence is Salivary thrombin inhibitor anophelin (83 aa).

The first 22 residues, 1–22 (MANKLVLISLLCVVLVAKITQA), serve as a signal peptide directing secretion. Residues 25 to 51 (QYAPGDEPSYDEDTDDSDKLVENDTSI) are disordered. N-linked (GlcNAc...) asparagine glycosylation is present at Asn47. Positions 54-83 (EDYAAIEASLSETFNTAADPGRRLGEGSKP) are sufficient for host thrombin inhibition. A blocks exosite I of host thrombin region spans residues 56–62 (YAAIEAS). Residues 64–83 (SETFNTAADPGRRLGEGSKP) form a disordered region. The blocks active site cleft of host thrombin in a reverse direction compared to substrates stretch occupies residues 72–75 (DPGR). The segment covering 73 to 83 (PGRRLGEGSKP) has biased composition (basic and acidic residues).

This sequence belongs to the anophelin family. In terms of assembly, interacts with human F2 (thrombin); the interaction results in thrombin inhibition. Salivary gland (at protein level).

Its subcellular location is the secreted. With respect to regulation, increasing concentration of NaCl decreases affinity for thrombin. Salivary protein with anticoagulant activity that inhibits host thrombin (F2); binds to the proteinase in a reverse orientation (opposite to substrates). Inhibits thrombin-induced platelet aggregation. This is Salivary thrombin inhibitor anophelin from Anopheles albimanus (New world malaria mosquito).